A 314-amino-acid chain; its full sequence is Nerylneryl diphosphate synthase CPT2, chloroplastic (314 aa).

A chloroplast-targeting transit peptide spans 1–61 (MNSSIVSQHF…MSDRGLSKIS (61 aa)). Asp97 is a catalytic residue.

The protein belongs to the UPP synthase family. Mg(2+) is required as a cofactor. In terms of tissue distribution, expressed in stems. Expressed in petiolules. Expressed at low levels in leaf trichomes, old leaf and roots.

It is found in the plastid. The protein localises to the chloroplast. It catalyses the reaction 3 isopentenyl diphosphate + dimethylallyl diphosphate = nerylneryl diphosphate + 3 diphosphate. The enzyme catalyses isopentenyl diphosphate + dimethylallyl diphosphate = neryl diphosphate + diphosphate. It carries out the reaction neryl diphosphate + isopentenyl diphosphate = (2Z,6Z)-farnesyl diphosphate + diphosphate. The catalysed reaction is (2Z,6Z)-farnesyl diphosphate + isopentenyl diphosphate = nerylneryl diphosphate + diphosphate. In terms of biological role, uses dimethylallyl diphosphate and isopentenyl diphosphate to catalyze the cis-prenyl chain elongation and produce the 20 carbon product nerylneryl diphosphate. In Solanum lycopersicum (Tomato), this protein is Nerylneryl diphosphate synthase CPT2, chloroplastic.